The chain runs to 335 residues: 2-acylglycerol O-acyltransferase 1 (335 aa).

A run of 2 helical transmembrane segments spans residues threonine 18–isoleucine 38 and valine 40–phenylalanine 60. N-linked (GlcNAc...) asparagine glycans are attached at residues asparagine 121 and asparagine 125. The chain crosses the membrane as a helical span at residues leucine 132 to phenylalanine 152. The N-linked (GlcNAc...) asparagine glycan is linked to asparagine 180.

The protein belongs to the diacylglycerol acyltransferase family. In terms of tissue distribution, expressed in stomach and liver.

The protein resides in the endoplasmic reticulum membrane. It catalyses the reaction a 2-acylglycerol + an acyl-CoA = a 1,2-diacylglycerol + CoA. It carries out the reaction 2-(9Z-octadecenoyl)-glycerol + butanoyl-CoA = 1-butanoyl-2-(9Z-octadecenoyl)-glycerol + CoA. The enzyme catalyses 2-(9Z-octadecenoyl)-glycerol + octanoyl-CoA = 1-octanoyl-2-(9Z-octadecenoyl)-glycerol + CoA. The catalysed reaction is 2-(9Z-octadecenoyl)-glycerol + dodecanoyl-CoA = 1-dodecanoyl-2-(9Z-octadecenoyl)-glycerol + CoA. It catalyses the reaction 2-(9Z-octadecenoyl)-glycerol + tetradecanoyl-CoA = 1-tetradecanoyl-2-(9Z-octadecenoyl)-glycerol + CoA. It carries out the reaction 2-(9Z-octadecenoyl)-glycerol + hexadecanoyl-CoA = 1-hexadecanoyl-2-(9Z-octadecenoyl)-glycerol + CoA. The enzyme catalyses 2-(9Z-octadecenoyl)-glycerol + octadecanoyl-CoA = 1-octadecanoyl-2-(9Z-octadecenoyl)-glycerol + CoA. The catalysed reaction is eicosanoyl-CoA + 2-(9Z-octadecenoyl)-glycerol = 1-eicosanoyl-2-(9Z-octadecenoyl)-glycerol + CoA. It catalyses the reaction 2-(9Z-octadecenoyl)-glycerol + (9Z)-octadecenoyl-CoA = 1,2-di-(9Z-octadecenoyl)-glycerol + CoA. It carries out the reaction 2-(9Z-octadecenoyl)-glycerol + (9Z,12Z)-octadecadienoyl-CoA = 1-(9Z,12Z-octadecadienoyl)-2-(9Z-octadecenoyl)-glycerol + CoA. The enzyme catalyses 2-(9Z-octadecenoyl)-glycerol + (5Z,8Z,11Z,14Z)-eicosatetraenoyl-CoA = 1-(5Z,8Z,11Z,14Z-eicosatetraenoyl)-2-(9Z-octadecenoyl)-glycerol + CoA. The catalysed reaction is a 2-acylglycerol + an acyl-CoA = a 1,2-diacyl-sn-glycerol + CoA. It catalyses the reaction a 2-acylglycerol + an acyl-CoA = a 2,3-diacyl-sn-glycerol + CoA. It carries out the reaction a 1-acylglycerol + an acyl-CoA = a 1,2-diacylglycerol + CoA. The enzyme catalyses 1-dodecanoylglycerol + (9Z)-octadecenoyl-CoA = 1-dodecanoyl-2-(9Z-octadecenoyl)-glycerol + CoA. The catalysed reaction is 1-tetradecanoylglycerol + (9Z)-octadecenoyl-CoA = 1-tetradecanoyl-2-(9Z-octadecenoyl)-glycerol + CoA. It catalyses the reaction 1-hexadecanoylglycerol + (9Z)-octadecenoyl-CoA = 1-hexadecanoyl-2-(9Z-octadecenoyl)-glycerol + CoA. It carries out the reaction 1-(9Z-octadecenoyl)-glycerol + (9Z)-octadecenoyl-CoA = 1,2-di-(9Z-octadecenoyl)-glycerol + CoA. The enzyme catalyses 1-(9Z,12Z-octadecadienoyl)-glycerol + (9Z)-octadecenoyl-CoA = 1-(9Z,12Z-octadecadienoyl)-2-(9Z-octadecenoyl)-glycerol + CoA. The catalysed reaction is 1-(9Z,12Z,15Z-octadecatrienoyl)-glycerol + (9Z)-octadecenoyl-CoA = 1-(9Z,12Z,15Z-octadecatrienoyl)-2-(9Z-octadecenoyl)-glycerol + CoA. It catalyses the reaction 1-(5Z,8Z,11Z,14Z-eicosatetraenoyl)-glycerol + (9Z)-octadecenoyl-CoA = 1-(5Z,8Z,11Z,14Z-eicosatetraenoyl)-2-(9Z-octadecenoyl)-glycerol + CoA. It carries out the reaction a 1-acylglycerol + an acyl-CoA = a 1,3-diacylglycerol + CoA. The enzyme catalyses 1-dodecanoylglycerol + (9Z)-octadecenoyl-CoA = 1-dodecanoyl-3-(9Z-octadecenoyl)-glycerol + CoA. The catalysed reaction is 1-hexadecanoylglycerol + (9Z)-octadecenoyl-CoA = 1-(9Z-octadecenoyl)-3-hexadecanoylglycerol + CoA. It catalyses the reaction 1-octadecanoylglycerol + (9Z)-octadecenoyl-CoA = 1-octadecanoyl-3-(9Z-octadecenoyl)-glycerol + CoA. It carries out the reaction 1-(9Z-octadecenoyl)-sn-glycerol + (9Z)-octadecenoyl-CoA = 1,3-di-(9Z-octadecenoyl)-glycerol + CoA. The enzyme catalyses 1-(9Z,12Z-octadecadienoyl)-glycerol + (9Z)-octadecenoyl-CoA = 1-(9Z-octadecenoyl)-3-(9Z,12Z-octadecadienoyl)-glycerol + CoA. The catalysed reaction is 1-(9Z,12Z,15Z-octadecatrienoyl)-glycerol + (9Z)-octadecenoyl-CoA = 1-(9Z,12Z,15Z-octadecatrienoyl)-3-(9Z-octadecenoyl)-glycerol + CoA. It catalyses the reaction a 1-acyl-sn-glycerol + an acyl-CoA = a 1,3-diacyl-sn-glycerol + CoA. It carries out the reaction a 3-acyl-sn-glycerol + an acyl-CoA = a 1,3-diacyl-sn-glycerol + CoA. The enzyme catalyses 3-octadecanoyl-sn-glycerol + (9Z)-octadecenoyl-CoA = 1-(9Z-octadecenoyl)-3-octadecanoyl-sn-glycerol + CoA. It participates in glycerolipid metabolism; triacylglycerol biosynthesis. In terms of biological role, involved in glycerolipid synthesis and lipid metabolism. Catalyzes the formation of diacylglycerol, the precursor of triacylglycerol, by transferring the acyl chain of a fatty acyl-CoA to a monoacylglycerol, mainly at the sn-1 or sn-3 positions. It uses both sn-2-monoacylglycerol (2-acylglycerol) and sn-1-monoacylglycerol (1-acyl-sn-glycerol) equally well as substrates, and uses sn-3-monoacylglycerol (3-acyl-sn-glycerol) with lower efficiency. Probably not involved in absorption of dietary fat in the small intestine. The protein is 2-acylglycerol O-acyltransferase 1 of Homo sapiens (Human).